The sequence spans 414 residues: Esterase FrsA (414 aa).

This sequence belongs to the FrsA family.

It carries out the reaction a carboxylic ester + H2O = an alcohol + a carboxylate + H(+). Functionally, catalyzes the hydrolysis of esters. The sequence is that of Esterase FrsA from Escherichia coli (strain K12 / DH10B).